Consider the following 298-residue polypeptide: 4-hydroxy-tetrahydrodipicolinate synthase (298 aa).

Position 51 (threonine 51) interacts with pyruvate. Residue tyrosine 140 is the Proton donor/acceptor of the active site. Lysine 168 functions as the Schiff-base intermediate with substrate in the catalytic mechanism. Pyruvate is bound at residue isoleucine 210.

This sequence belongs to the DapA family. Homotetramer; dimer of dimers.

The protein localises to the cytoplasm. It carries out the reaction L-aspartate 4-semialdehyde + pyruvate = (2S,4S)-4-hydroxy-2,3,4,5-tetrahydrodipicolinate + H2O + H(+). It participates in amino-acid biosynthesis; L-lysine biosynthesis via DAP pathway; (S)-tetrahydrodipicolinate from L-aspartate: step 3/4. Functionally, catalyzes the condensation of (S)-aspartate-beta-semialdehyde [(S)-ASA] and pyruvate to 4-hydroxy-tetrahydrodipicolinate (HTPA). The polypeptide is 4-hydroxy-tetrahydrodipicolinate synthase (Acidovorax sp. (strain JS42)).